A 382-amino-acid chain; its full sequence is Putative glutamate--cysteine ligase 2-1 (382 aa).

It belongs to the glutamate--cysteine ligase type 2 family. YbdK subfamily.

The catalysed reaction is L-cysteine + L-glutamate + ATP = gamma-L-glutamyl-L-cysteine + ADP + phosphate + H(+). In terms of biological role, ATP-dependent carboxylate-amine ligase which exhibits weak glutamate--cysteine ligase activity. The sequence is that of Putative glutamate--cysteine ligase 2-1 from Frankia alni (strain DSM 45986 / CECT 9034 / ACN14a).